Consider the following 93-residue polypeptide: Consomatin G2 (93 aa).

The signal sequence occupies residues 1 to 18 (MQTAYWVMLMMMVCITAP). The propeptide occupies 19–69 (LPEGGKPNSGIRGLVPNDLTPQHTLRSLISRRQTDVLLDATLLTTPAPEQR). A disulfide bridge connects residues cysteine 72 and cysteine 77. Residue tryptophan 74 is modified to D-tryptophan. Positions 79-93 (WRPYPWRRRDLNGKR) are excised as a propeptide.

This sequence belongs to the conotoxin C superfamily. Consomatin family. Expressed by the venom duct.

It is found in the secreted. Moderately activates human somatostatin receptors (SSTR) with a preferential activation of SSTR1 and SSTR4. In vivo, does not cause behavioral changes in mice within a few minutes of intracranial injection, but causes a progressive loss of movement thereafter. Four to five hours after injection, mice recover, even with the highest dose tested. Shows antinociception and antihyperalgesia activities in two mouse models of acute pain, most probably by acting outside the central nervous system. The sequence is that of Consomatin G2 from Conus geographus (Geography cone).